The following is a 252-amino-acid chain: tRNA1(Val) (adenine(37)-N6)-methyltransferase (252 aa).

Belongs to the methyltransferase superfamily. tRNA (adenine-N(6)-)-methyltransferase family.

Its subcellular location is the cytoplasm. The catalysed reaction is adenosine(37) in tRNA1(Val) + S-adenosyl-L-methionine = N(6)-methyladenosine(37) in tRNA1(Val) + S-adenosyl-L-homocysteine + H(+). Its function is as follows. Specifically methylates the adenine in position 37 of tRNA(1)(Val) (anticodon cmo5UAC). The polypeptide is tRNA1(Val) (adenine(37)-N6)-methyltransferase (Proteus mirabilis (strain HI4320)).